The chain runs to 585 residues: Protein FAM13C (585 aa).

Disordered regions lie at residues 26-45 (PVSL…ENNK), 83-138 (SMGN…NAFK), and 171-216 (EAAQ…APED). Basic and acidic residues-rich tracts occupy residues 27–45 (VSLH…ENNK) and 99–112 (ESGR…ETEH). Ser131 carries the post-translational modification Phosphoserine. Ser238 bears the Phosphoserine mark. 3 disordered regions span residues 250 to 282 (FNLD…DGKE), 349 to 391 (EEQG…EETP), and 441 to 477 (IPTI…DHLT). Positions 262-275 (STQQFMMPRSSSRC) are enriched in polar residues. Phosphoserine occurs at positions 385 and 386.

It belongs to the FAM13 family.

The sequence is that of Protein FAM13C (FAM13C) from Homo sapiens (Human).